The primary structure comprises 221 residues: Cytidylate kinase (221 aa).

Residue 7-15 (GPSASGKSS) coordinates ATP.

The protein belongs to the cytidylate kinase family. Type 1 subfamily.

The protein localises to the cytoplasm. It carries out the reaction CMP + ATP = CDP + ADP. It catalyses the reaction dCMP + ATP = dCDP + ADP. The polypeptide is Cytidylate kinase (Borreliella burgdorferi (strain ZS7) (Borrelia burgdorferi)).